The primary structure comprises 92 residues: Acylphosphatase (92 aa).

An Acylphosphatase-like domain is found at 6–92 (RMYVIVYGIV…TGEFASFDTY (87 aa)). Residues R21 and N39 contribute to the active site.

Belongs to the acylphosphatase family.

The catalysed reaction is an acyl phosphate + H2O = a carboxylate + phosphate + H(+). The sequence is that of Acylphosphatase (acyP) from Sulfolobus acidocaldarius (strain ATCC 33909 / DSM 639 / JCM 8929 / NBRC 15157 / NCIMB 11770).